We begin with the raw amino-acid sequence, 507 residues long: Histidine ammonia-lyase (507 aa).

The 5-imidazolinone (Ala-Gly) cross-link spans 141 to 143 (ASG). Serine 142 carries the post-translational modification 2,3-didehydroalanine (Ser).

Belongs to the PAL/histidase family. Contains an active site 4-methylidene-imidazol-5-one (MIO), which is formed autocatalytically by cyclization and dehydration of residues Ala-Ser-Gly.

The protein localises to the cytoplasm. The enzyme catalyses L-histidine = trans-urocanate + NH4(+). The protein operates within amino-acid degradation; L-histidine degradation into L-glutamate; N-formimidoyl-L-glutamate from L-histidine: step 1/3. The sequence is that of Histidine ammonia-lyase from Cereibacter sphaeroides (strain ATCC 17023 / DSM 158 / JCM 6121 / CCUG 31486 / LMG 2827 / NBRC 12203 / NCIMB 8253 / ATH 2.4.1.) (Rhodobacter sphaeroides).